Consider the following 206-residue polypeptide: Protein SYM1 (206 aa).

The next 3 membrane-spanning stretches (helical) occupy residues 16–36 (PLIT…YLAQ), 103–123 (LVFA…VLEF), and 155–175 (LFNF…IFSI).

This sequence belongs to the peroxisomal membrane protein PXMP2/4 family.

It is found in the mitochondrion inner membrane. May be involved in cellular response to stress. Required to maintain mitochondrial DNA (mtDNA) integrity and stability. The polypeptide is Protein SYM1 (SYM1) (Debaryomyces hansenii (strain ATCC 36239 / CBS 767 / BCRC 21394 / JCM 1990 / NBRC 0083 / IGC 2968) (Yeast)).